The following is a 968-amino-acid chain: MPFTLGQRWISDTESELGLGTVVAIDVRMITLLFPATGENRLYARNDSPITRVMFNPSDTITHHEGWQLKVEEVTQENGLITYIGTRLDTEETGVAMREVLLDSKLTFSKPQDRLFAGQIDRMDRFALRFRARKYQSEQFRLPWSGLRGIRASLIPHQLHIAYEVGQRHAPRVLLADEVGLGKTIEAGMIIHQQLLAGRAERVLIVVPESLQHQWLVEMLRRFNLRFSLFDDSRYSEALLDSSNPFDTEQMVICSLDFVRRNKQRLEQLADASWDLLVVDEAHHMAWSEEAPSREYQVIEQLAEHIPGVLLLTATPEQLGQQSHFARLRLLDPDRFHDYEEFVNEQQKYRPIADAVTLLLGGERLTDDKLNLLGELIDEQDIEPLLKAANSQSEDSEAARQELVTMLMDRHGTSRVLFRNTRNGVKGFPHRVLHQIKLPLPTQYQTAIKVSGIMGAKKTLDARAKDMLYPEQIYQEFEGENATWWNFDPRVEWLLNYLVANRGEKVLVICAQAATALQLEQVLREREAIRAAVFHEGLSLIERDRAAAYFASEEDGAQVLLCSEIGSEGRNFQFACQLVMFDLPFNPDLLEQRIGRLDRIGQNREIQIMVPYLEDTAQAILVRWYHEGLDAFEHTCPTGRTIYDSSYQELISYLATPSEQEGLDEFIHTCRQQHEGLKLQLEQGRDRLLEMHSNGGEHGQELAQSIAEQDNDINLVSFALNLFDIVGINQEDRSDNLIVLTPSDHMLVPDFPGLPPDGCTVTFDREQALSREDAQFVSWEHPIIRNGLDLILSGDTGSCAVSLLKNKALPVGTLLAELVYVVEAQAPKHLQLTRFLPPTPVRMLMDRNGTNLAAQVEFESFNRQLNAVNRHTSSKLVNAVQQEVHTMLQQAEALVEAQAQALIETAKREADDKLSTELARLEALKAVNPNIRDDEIEALEHNRKMVLENLNQAGWRLDAIRLVVVTHQ.

Residues 164 to 334 form the Helicase ATP-binding domain; the sequence is EVGQRHAPRV…FARLRLLDPD (171 aa). 177–184 contributes to the ATP binding site; sequence DEVGLGKT. Residues 280–283 carry the DEAH box motif; it reads DEAH. Positions 490-644 constitute a Helicase C-terminal domain; the sequence is RVEWLLNYLV…TCPTGRTIYD (155 aa).

This sequence belongs to the SNF2/RAD54 helicase family. RapA subfamily. In terms of assembly, interacts with the RNAP. Has a higher affinity for the core RNAP than for the holoenzyme. Its ATPase activity is stimulated by binding to RNAP.

Transcription regulator that activates transcription by stimulating RNA polymerase (RNAP) recycling in case of stress conditions such as supercoiled DNA or high salt concentrations. Probably acts by releasing the RNAP, when it is trapped or immobilized on tightly supercoiled DNA. Does not activate transcription on linear DNA. Probably not involved in DNA repair. The chain is RNA polymerase-associated protein RapA from Yersinia pestis bv. Antiqua (strain Antiqua).